The sequence spans 227 residues: Cytidylate kinase (227 aa).

10–18 is a binding site for ATP; that stretch reads GPASSGKST.

It belongs to the cytidylate kinase family. Type 1 subfamily.

The protein resides in the cytoplasm. The enzyme catalyses CMP + ATP = CDP + ADP. It catalyses the reaction dCMP + ATP = dCDP + ADP. The sequence is that of Cytidylate kinase from Streptococcus agalactiae serotype V (strain ATCC BAA-611 / 2603 V/R).